The following is a 118-amino-acid chain: Large ribosomal subunit protein bL20 (118 aa).

This sequence belongs to the bacterial ribosomal protein bL20 family.

In terms of biological role, binds directly to 23S ribosomal RNA and is necessary for the in vitro assembly process of the 50S ribosomal subunit. It is not involved in the protein synthesizing functions of that subunit. In Elusimicrobium minutum (strain Pei191), this protein is Large ribosomal subunit protein bL20.